We begin with the raw amino-acid sequence, 376 residues long: Probable plastid-lipid-associated protein 3, chloroplastic (376 aa).

The N-terminal 53 residues, 1 to 53, are a transit peptide targeting the chloroplast; sequence MATLFTVARPSSLLYVSSINPSKTFSPSISLKLNSLSFSFGYRPKPLRFSKIR. The segment at 54–146 is disordered; the sequence is SSLPSESESE…EADAGNGSAV (93 aa). Residues 85 to 96 show a composition bias toward polar residues; the sequence is PDSQPDNVTVNV. Residues 117-126 are compositionally biased toward basic and acidic residues; that stretch reads MESDPPRNED.

Belongs to the PAP/fibrillin family.

The protein localises to the plastid. The protein resides in the chloroplast. Its subcellular location is the plastoglobule. In terms of biological role, probably involved in light/cold stress-related jasmonate (JA) biosynthesis. The polypeptide is Probable plastid-lipid-associated protein 3, chloroplastic (PAP3) (Arabidopsis thaliana (Mouse-ear cress)).